The sequence spans 440 residues: GTPase Der (440 aa).

EngA-type G domains follow at residues 3–168 and 177–353; these read PIIA…GKMD and LKLA…EEYT. Residues 9–16, 56–60, 119–122, 183–190, 230–234, and 295–298 contribute to the GTP site; these read GRPNVGKS, DTGGL, NKID, GKPNAGKS, DTAGI, and NKWD. The region spanning 354 to 438 is the KH-like domain; sequence KRISTGLLNT…PIMISFENKS (85 aa).

Belongs to the TRAFAC class TrmE-Era-EngA-EngB-Septin-like GTPase superfamily. EngA (Der) GTPase family. As to quaternary structure, associates with the 50S ribosomal subunit.

GTPase that plays an essential role in the late steps of ribosome biogenesis. This is GTPase Der from Fusobacterium nucleatum subsp. nucleatum (strain ATCC 25586 / DSM 15643 / BCRC 10681 / CIP 101130 / JCM 8532 / KCTC 2640 / LMG 13131 / VPI 4355).